The chain runs to 402 residues: MRMSLVFACLAMGLALTFAEGSASSHHQSLAARLATDFGVKVFRQVVQASKDRNVVFSPYGVASVLAMLQLTTAGDTQQQIQEAMQFKIEEKGMAPALRQLYKELMGPWNKDEISTADAIFVQRDLKLVQGFMPYFFRLFRTTVKQVDFSEMDRARFIINDWVKRHTKGMINDLLGQGAVDQLTRLVLVNALYFNGQWKTPFPEKSTHHRLFHKSDGSTVSVPMMAQTNKFNYTEFSTPDGHYYDILELPYHGNTLSMFIAAPYEKEVPLSALTSILDAQLISQWKGNMTRLTRLLVLPKFSLESEVDLRRPLENLGMTDMFRPNQADFSSLSDQELLYMSQALQKVKIEVNESGTVASSSTAIIVSARMAPEEIIMDRPFLFVVRHNPTGTVLFMGQVMEP.

The signal sequence occupies residues 1 to 23; the sequence is MRMSLVFACLAMGLALTFAEGSA. Asn-232, Asn-288, and Asn-352 each carry an N-linked (GlcNAc...) asparagine glycan.

Belongs to the serpin family. As to quaternary structure, forms a heterodimer with TMPRSS7. Interacts with VTN. Binds LRP1B; binding is followed by internalization and degradation. Interacts with PPP1CB. In complex with PLAU/uPA, interacts with PLAUR/uPAR. Interacts with SORL1 and LRP1, either alone or in complex with PLAU; these interactions are abolished in the presence of LRPAP1/RAP. The ternary complex composed of PLAUR-PLAU-PAI1 also interacts with SORL1. Interacts with PLAT/tPA. Also interacts with SORL1, when complexed to PLAT/tPA.

The protein localises to the secreted. Serine protease inhibitor. Inhibits TMPRSS7. Is a primary inhibitor of tissue-type plasminogen activator (PLAT) and urokinase-type plasminogen activator (PLAU). As PLAT inhibitor, it is required for fibrinolysis down-regulation and is responsible for the controlled degradation of blood clots. As PLAU inhibitor, it is involved in the regulation of cell adhesion and spreading. Acts as a regulator of cell migration, independently of its role as protease inhibitor. It is required for stimulation of keratinocyte migration during cutaneous injury repair. It is involved in cellular and replicative senescence. Plays a role in alveolar type 2 cells senescence in the lung. Is involved in the regulation of cementogenic differentiation of periodontal ligament stem cells, and regulates odontoblast differentiation and dentin formation during odontogenesis. This chain is Plasminogen activator inhibitor 1 (SERPINE1), found in Sus scrofa (Pig).